The chain runs to 268 residues: Deoxyuridine 5'-triphosphate nucleotidohydrolase (268 aa).

Residues 172–174 and 263–264 each bind substrate; these read RSS and FG.

This sequence belongs to the dUTPase family. It depends on Mg(2+) as a cofactor.

It carries out the reaction dUTP + H2O = dUMP + diphosphate + H(+). Functionally, involved in nucleotide metabolism: produces dUMP, the immediate precursor of thymidine nucleotides and decreases the intracellular concentration of dUTP to avoid uracil incorporation into viral DNA. This chain is Deoxyuridine 5'-triphosphate nucleotidohydrolase, found in Suid herpesvirus 1 (strain Kaplan) (SuHV-1).